The sequence spans 148 residues: Urease accessory protein UreE (148 aa).

This sequence belongs to the UreE family.

The protein localises to the cytoplasm. Involved in urease metallocenter assembly. Binds nickel. Probably functions as a nickel donor during metallocenter assembly. In Bacillus sp. (strain TB-90), this protein is Urease accessory protein UreE.